The primary structure comprises 422 residues: Tyrosine--tRNA ligase (422 aa).

Residue tyrosine 37 participates in L-tyrosine binding. The short motif at 42 to 51 is the 'HIGH' region element; the sequence is PTEESLHIGH. L-tyrosine contacts are provided by tyrosine 175 and glutamine 179. Positions 235–239 match the 'KMSKS' region motif; sequence KFGKT. Lysine 238 provides a ligand contact to ATP. An S4 RNA-binding domain is found at 357–414; it reads KDLQEALVLTSLAQSRTQAKNMIISNSISINTEKIRKNHIFHEKDKLFGKFTLLSRGK.

It belongs to the class-I aminoacyl-tRNA synthetase family. TyrS type 1 subfamily. Homodimer.

It localises to the cytoplasm. It carries out the reaction tRNA(Tyr) + L-tyrosine + ATP = L-tyrosyl-tRNA(Tyr) + AMP + diphosphate + H(+). In terms of biological role, catalyzes the attachment of tyrosine to tRNA(Tyr) in a two-step reaction: tyrosine is first activated by ATP to form Tyr-AMP and then transferred to the acceptor end of tRNA(Tyr). This chain is Tyrosine--tRNA ligase, found in Buchnera aphidicola subsp. Acyrthosiphon pisum (strain APS) (Acyrthosiphon pisum symbiotic bacterium).